Here is a 374-residue protein sequence, read N- to C-terminus: Fanconi anemia group F protein (374 aa).

As to quaternary structure, belongs to the multisubunit FA complex composed of FANCA, FANCB, FANCC, FANCE, FANCF, FANCG, FANCL/PHF9 and FANCM. The complex is not found in FA patients. In complex with FANCA, FANCG and FANCL, but not with FANCC, nor FANCE, interacts with HES1; this interaction may be essential for the stability and nuclear localization of FA core complex proteins.

It localises to the nucleus. Its function is as follows. DNA repair protein that may operate in a postreplication repair or a cell cycle checkpoint function. May be implicated in interstrand DNA cross-link repair and in the maintenance of normal chromosome stability. The protein is Fanconi anemia group F protein (FANCF) of Homo sapiens (Human).